The sequence spans 174 residues: CDP-archaeol synthase (174 aa).

The next 4 helical transmembrane spans lie at 51-71 (LIGL…AGFI), 74-94 (SLLV…ALLG), 112-132 (MLPI…TFLL), and 136-156 (WLLA…IPVF).

This sequence belongs to the CDP-archaeol synthase family. It depends on Mg(2+) as a cofactor.

It is found in the cell membrane. It carries out the reaction 2,3-bis-O-(geranylgeranyl)-sn-glycerol 1-phosphate + CTP + H(+) = CDP-2,3-bis-O-(geranylgeranyl)-sn-glycerol + diphosphate. It functions in the pathway membrane lipid metabolism; glycerophospholipid metabolism. Its function is as follows. Catalyzes the formation of CDP-2,3-bis-(O-geranylgeranyl)-sn-glycerol (CDP-archaeol) from 2,3-bis-(O-geranylgeranyl)-sn-glycerol 1-phosphate (DGGGP) and CTP. This reaction is the third ether-bond-formation step in the biosynthesis of archaeal membrane lipids. This is CDP-archaeol synthase from Methanocella arvoryzae (strain DSM 22066 / NBRC 105507 / MRE50).